We begin with the raw amino-acid sequence, 187 residues long: MGLSLHPQIDNGLTKGQPGFPGGKLYCHCPSNKIEVTLGSDVLHNHACGCSKCWKPAGSLFSVVGVIPTDKVSVTANSDKLTIVDSEAVIQRNACSQCGVHMFGRIHKEHPFKGLDFVHAELSDTKGWQEPQFAAFVSSIIEQGFKPEGMDEVRAKFESVGLKTYDALSPALMDAIATWTAKRAGKL.

One can recognise a CENP-V/GFA domain in the interval 20 to 166 (FPGGKLYCHC…FESVGLKTYD (147 aa)). Residues Cys27, Cys29, Cys48, Cys50, Cys53, Cys95, and Cys98 each contribute to the Zn(2+) site.

This sequence belongs to the Gfa family. Zn(2+) is required as a cofactor.

It catalyses the reaction S-(hydroxymethyl)glutathione = glutathione + formaldehyde. It functions in the pathway one-carbon metabolism; formaldehyde degradation; formate from formaldehyde (glutathione route): step 1/3. In terms of biological role, catalyzes the condensation of formaldehyde and glutathione to S-hydroxymethylglutathione. The protein is Putative glutathione-dependent formaldehyde-activating enzyme of Talaromyces marneffei (strain ATCC 18224 / CBS 334.59 / QM 7333) (Penicillium marneffei).